The following is a 313-amino-acid chain: Porphobilinogen deaminase (313 aa).

Cys-242 bears the S-(dipyrrolylmethanemethyl)cysteine mark.

The protein belongs to the HMBS family. As to quaternary structure, monomer. The cofactor is dipyrromethane.

The enzyme catalyses 4 porphobilinogen + H2O = hydroxymethylbilane + 4 NH4(+). It functions in the pathway porphyrin-containing compound metabolism; protoporphyrin-IX biosynthesis; coproporphyrinogen-III from 5-aminolevulinate: step 2/4. Its function is as follows. Tetrapolymerization of the monopyrrole PBG into the hydroxymethylbilane pre-uroporphyrinogen in several discrete steps. The sequence is that of Porphobilinogen deaminase from Yersinia pseudotuberculosis serotype IB (strain PB1/+).